Reading from the N-terminus, the 494-residue chain is ATP synthase subunit beta (494 aa).

177–184 (GGAGVGKT) is an ATP binding site.

Belongs to the ATPase alpha/beta chains family. As to quaternary structure, F-type ATPases have 2 components, CF(1) - the catalytic core - and CF(0) - the membrane proton channel. CF(1) has five subunits: alpha(3), beta(3), gamma(1), delta(1), epsilon(1). CF(0) has three main subunits: a(1), b(2) and c(9-12). The alpha and beta chains form an alternating ring which encloses part of the gamma chain. CF(1) is attached to CF(0) by a central stalk formed by the gamma and epsilon chains, while a peripheral stalk is formed by the delta and b chains.

The protein resides in the cell membrane. The catalysed reaction is ATP + H2O + 4 H(+)(in) = ADP + phosphate + 5 H(+)(out). Functionally, produces ATP from ADP in the presence of a proton gradient across the membrane. The catalytic sites are hosted primarily by the beta subunits. The protein is ATP synthase subunit beta of Bifidobacterium adolescentis (strain ATCC 15703 / DSM 20083 / NCTC 11814 / E194a).